The sequence spans 217 residues: Sentrin-specific protease 8 (217 aa).

Residue M1 is modified to N-acetylmethionine. The segment at 11-174 is protease; that stretch reads SLLRQSDVSL…MYVICNTEAL (164 aa). Active-site residues include H102 and D119. C163 functions as the Nucleophile in the catalytic mechanism.

It belongs to the peptidase C48 family.

Protease that catalyzes two essential functions in the NEDD8 pathway: processing of full-length NEDD8 to its mature form and deconjugation of NEDD8 from targeted proteins such as cullins or p53. The protein is Sentrin-specific protease 8 (Senp8) of Rattus norvegicus (Rat).